The chain runs to 390 residues: Argininosuccinate synthase (390 aa).

6 to 14 contributes to the ATP binding site; sequence SYSGGLDTT. Tyr-83 is an L-citrulline binding site. Gly-113 is an ATP binding site. 3 residues coordinate L-aspartate: Thr-115, Asn-119, and Asp-120. Position 119 (Asn-119) interacts with L-citrulline. Residues Arg-123, Ser-169, Ser-178, Glu-254, and Tyr-266 each coordinate L-citrulline.

The protein belongs to the argininosuccinate synthase family. Type 1 subfamily. As to quaternary structure, homotetramer.

The protein localises to the cytoplasm. The catalysed reaction is L-citrulline + L-aspartate + ATP = 2-(N(omega)-L-arginino)succinate + AMP + diphosphate + H(+). It participates in amino-acid biosynthesis; L-arginine biosynthesis; L-arginine from L-ornithine and carbamoyl phosphate: step 2/3. The sequence is that of Argininosuccinate synthase from Archaeoglobus fulgidus (strain ATCC 49558 / DSM 4304 / JCM 9628 / NBRC 100126 / VC-16).